The sequence spans 316 residues: 4-hydroxy-3-methylbut-2-enyl diphosphate reductase (316 aa).

Cys-12 provides a ligand contact to [4Fe-4S] cluster. Positions 43 and 81 each coordinate (2E)-4-hydroxy-3-methylbut-2-enyl diphosphate. 2 residues coordinate dimethylallyl diphosphate: His-43 and His-81. 2 residues coordinate isopentenyl diphosphate: His-43 and His-81. Residue Cys-103 coordinates [4Fe-4S] cluster. His-131 provides a ligand contact to (2E)-4-hydroxy-3-methylbut-2-enyl diphosphate. A dimethylallyl diphosphate-binding site is contributed by His-131. His-131 serves as a coordination point for isopentenyl diphosphate. Glu-133 functions as the Proton donor in the catalytic mechanism. Thr-170 is a binding site for (2E)-4-hydroxy-3-methylbut-2-enyl diphosphate. Cys-198 is a binding site for [4Fe-4S] cluster. 3 residues coordinate (2E)-4-hydroxy-3-methylbut-2-enyl diphosphate: Ser-226, Asn-228, and Ser-271. 3 residues coordinate dimethylallyl diphosphate: Ser-226, Asn-228, and Ser-271. 3 residues coordinate isopentenyl diphosphate: Ser-226, Asn-228, and Ser-271.

Belongs to the IspH family. [4Fe-4S] cluster serves as cofactor.

It catalyses the reaction isopentenyl diphosphate + 2 oxidized [2Fe-2S]-[ferredoxin] + H2O = (2E)-4-hydroxy-3-methylbut-2-enyl diphosphate + 2 reduced [2Fe-2S]-[ferredoxin] + 2 H(+). The catalysed reaction is dimethylallyl diphosphate + 2 oxidized [2Fe-2S]-[ferredoxin] + H2O = (2E)-4-hydroxy-3-methylbut-2-enyl diphosphate + 2 reduced [2Fe-2S]-[ferredoxin] + 2 H(+). It participates in isoprenoid biosynthesis; dimethylallyl diphosphate biosynthesis; dimethylallyl diphosphate from (2E)-4-hydroxy-3-methylbutenyl diphosphate: step 1/1. It functions in the pathway isoprenoid biosynthesis; isopentenyl diphosphate biosynthesis via DXP pathway; isopentenyl diphosphate from 1-deoxy-D-xylulose 5-phosphate: step 6/6. Its function is as follows. Catalyzes the conversion of 1-hydroxy-2-methyl-2-(E)-butenyl 4-diphosphate (HMBPP) into a mixture of isopentenyl diphosphate (IPP) and dimethylallyl diphosphate (DMAPP). Acts in the terminal step of the DOXP/MEP pathway for isoprenoid precursor biosynthesis. The sequence is that of 4-hydroxy-3-methylbut-2-enyl diphosphate reductase from Bacillus cereus (strain AH820).